We begin with the raw amino-acid sequence, 463 residues long: A-type ATP synthase subunit B (463 aa).

It belongs to the ATPase alpha/beta chains family. In terms of assembly, has multiple subunits with at least A(3), B(3), C, D, E, F, H, I and proteolipid K(x).

The protein resides in the cell membrane. Functionally, component of the A-type ATP synthase that produces ATP from ADP in the presence of a proton gradient across the membrane. The B chain is a regulatory subunit. The polypeptide is A-type ATP synthase subunit B (Thermococcus gammatolerans (strain DSM 15229 / JCM 11827 / EJ3)).